Consider the following 83-residue polypeptide: U2-hexatoxin-Hi1a (83 aa).

A signal peptide spans 1 to 23 (MRNTTFLVLNVMLLVSVALFCAA). Positions 24–45 (DPEMEKSSFAEILDTGNPEQER) are excised as a propeptide. Cystine bridges form between cysteine 47-cysteine 63, cysteine 54-cysteine 68, cysteine 62-cysteine 78, and cysteine 70-cysteine 76.

The protein belongs to the neurotoxin 07 (Beta/delta-agtx) family. Expressed by the venom gland.

Its subcellular location is the secreted. Functionally, inhibits sodium channels (Nav) of insects. This Hadronyche infensa (Fraser island funnel-web spider) protein is U2-hexatoxin-Hi1a.